The following is a 277-amino-acid chain: Large ribosomal subunit protein uL2 (277 aa).

A disordered region spans residues 219-277 (TVRGSVMNPNDHPHGGGEGKAPVGRKAPSTPWGKPALGLKTRNKKAKSDKLIVRRRNEK). Over residues 264 to 277 (AKSDKLIVRRRNEK) the composition is skewed to basic and acidic residues.

Belongs to the universal ribosomal protein uL2 family. In terms of assembly, part of the 50S ribosomal subunit. Forms a bridge to the 30S subunit in the 70S ribosome.

Its function is as follows. One of the primary rRNA binding proteins. Required for association of the 30S and 50S subunits to form the 70S ribosome, for tRNA binding and peptide bond formation. It has been suggested to have peptidyltransferase activity; this is somewhat controversial. Makes several contacts with the 16S rRNA in the 70S ribosome. This Streptococcus sanguinis (strain SK36) protein is Large ribosomal subunit protein uL2.